Reading from the N-terminus, the 92-residue chain is Translation initiation factor IF-1 (92 aa).

The region spanning Met1–Lys72 is the S1-like domain. The segment at Phe69 to Arg92 is disordered.

The protein belongs to the IF-1 family. In terms of assembly, component of the 30S ribosomal translation pre-initiation complex which assembles on the 30S ribosome in the order IF-2 and IF-3, IF-1 and N-formylmethionyl-tRNA(fMet); mRNA recruitment can occur at any time during PIC assembly.

It is found in the cytoplasm. Functionally, one of the essential components for the initiation of protein synthesis. Stabilizes the binding of IF-2 and IF-3 on the 30S subunit to which N-formylmethionyl-tRNA(fMet) subsequently binds. Helps modulate mRNA selection, yielding the 30S pre-initiation complex (PIC). Upon addition of the 50S ribosomal subunit IF-1, IF-2 and IF-3 are released leaving the mature 70S translation initiation complex. The polypeptide is Translation initiation factor IF-1 (Rhodopseudomonas palustris (strain ATCC BAA-98 / CGA009)).